The primary structure comprises 694 residues: Methionine--tRNA ligase (694 aa).

The 'HIGH' region signature appears at 14–24; that stretch reads PYANGPIHLGH. Residues cysteine 145, cysteine 148, cysteine 158, and cysteine 161 each coordinate Zn(2+). The short motif at 330–334 is the 'KMSKS' region element; that stretch reads KMSKS. Lysine 333 is a binding site for ATP. Positions 558–579 are disordered; that stretch reads SLQATAGQPEPHSQVRHAEHQQ. The 102-residue stretch at 593-694 folds into the tRNA-binding domain; the sequence is DFAKVDLRIA…EGAQPGMKVK (102 aa).

It belongs to the class-I aminoacyl-tRNA synthetase family. MetG type 1 subfamily. As to quaternary structure, homodimer. Zn(2+) is required as a cofactor.

It localises to the cytoplasm. It catalyses the reaction tRNA(Met) + L-methionine + ATP = L-methionyl-tRNA(Met) + AMP + diphosphate. In terms of biological role, is required not only for elongation of protein synthesis but also for the initiation of all mRNA translation through initiator tRNA(fMet) aminoacylation. In Methylococcus capsulatus (strain ATCC 33009 / NCIMB 11132 / Bath), this protein is Methionine--tRNA ligase.